A 335-amino-acid chain; its full sequence is MGCLLFLVLLEFQKIWGSFEAPQTSFPFRFLQISSFANHSWTRTDGLMWLGELQPYTWRNESSTIRFLKHWSQGTFSDQQWEQLQHTFQVYRSSFTRDIREFVKMLPGDYPFEIQISGGCELLPRNISESFLRAALQEKDVLSFQGMSWVSAPDAPPWSQVVCKVLNEDQGTKETVHWLLHDICPELVKGLMQTGKSELEKQVKPEAWLSSGPSPGPDRLLLGCHVSGFYPKPVWVMWMRGEQEEPGTQQGDVMPNADSTWYLRVTLEVAAGEAAGLSCRVKHSSLGDQDIILYWDGKRVSRGLIVVLVILVFVLLFVGGLVFWFRKHRRYQDIS.

Positions 1 to 17 are cleaved as a signal peptide; the sequence is MGCLLFLVLLEFQKIWG. Topologically, residues 18–304 are extracellular; sequence SFEAPQTSFP…WDGKRVSRGL (287 aa). N-linked (GlcNAc...) asparagine glycosylation is found at asparagine 38 and asparagine 60. Aspartate 98 lines the a D-galactosylceramide pocket. Cystine bridges form between cysteine 120–cysteine 184 and cysteine 224–cysteine 279. N-linked (GlcNAc...) asparagine glycosylation occurs at asparagine 126. Residues aspartate 169, 169–172, and threonine 172 each bind a D-galactosylceramide; that span reads DQGT. The Ig-like domain occupies 185–295; sequence PELVKGLMQT…LGDQDIILYW (111 aa). Residues 305-325 traverse the membrane as a helical segment; that stretch reads IVVLVILVFVLLFVGGLVFWF. At 326-335 the chain is on the cytoplasmic side; the sequence is RKHRRYQDIS. Positions 331–334 match the Internalization signal motif; sequence YQDI.

In terms of assembly, heterodimer with B2M (beta-2-microglobulin). Interacts with MHC II and CD74. As to expression, expressed on cortical thymocytes, on certain T-cell leukemias, and in various other tissues.

The protein localises to the cell membrane. Its subcellular location is the basolateral cell membrane. The protein resides in the endosome membrane. It localises to the lysosome membrane. It is found in the endoplasmic reticulum membrane. In terms of biological role, antigen-presenting protein that binds self and non-self glycolipids and presents them to T-cell receptors on natural killer T-cells. This chain is Antigen-presenting glycoprotein CD1d (CD1D), found in Ovis aries (Sheep).